We begin with the raw amino-acid sequence, 284 residues long: Four and a half LIM domains protein 5 (284 aa).

The segment at 8–32 (CQYCTSSLIGKKYVLKDDNLYCISC) adopts a C4-type zinc-finger fold. LIM zinc-binding domains lie at 39–100 (NYCE…ECSS), 101–160 (KCFH…KEFA), and 161–220 (HYCN…LYAK).

In terms of assembly, interacts with CREM (via the third LIM domain). Interacts (via second LIM domain) with SPAG8. As to expression, testis-specific, temporal expression is coordinated with CREM.

It localises to the nucleus. Functionally, may be involved in the regulation of spermatogenesis. Stimulates CREM transcriptional activity in a phosphorylation-independent manner. The polypeptide is Four and a half LIM domains protein 5 (Fhl5) (Mus musculus (Mouse)).